We begin with the raw amino-acid sequence, 277 residues long: Bleomycin hydrolase (277 aa).

C53 is a catalytic residue.

Belongs to the peptidase C1 family. In terms of assembly, homohexamer. Interacts with NUDT12 (via ANK repeats).

It localises to the cytoplasm. Its subcellular location is the cytoplasmic granule. It carries out the reaction Inactivates bleomycin B2 (a cytotoxic glycometallopeptide) by hydrolysis of a carboxyamide bond of beta-aminoalanine, but also shows general aminopeptidase activity. The specificity varies somewhat with source, but amino acid arylamides of Met, Leu and Ala are preferred.. Its activity is regulated as follows. Strongly inhibited by leupeptin, puromycin, NEM, and divalent cations. The normal physiological role of BLM hydrolase is unknown, but it catalyzes the inactivation of the antitumor drug BLM (a glycopeptide) by hydrolyzing the carboxamide bond of its B-aminoalaninamide moiety thus protecting normal and malignant cells from BLM toxicity. This chain is Bleomycin hydrolase (BLMH), found in Oryctolagus cuniculus (Rabbit).